Reading from the N-terminus, the 339-residue chain is Homeobox protein Hox-D13 (339 aa).

A disordered region spans residues 1-33 (MSRSGTWDMDGLRADGGAAGAAPASSSSSVAAP). Residues 20–33 (GAAPASSSSSVAAP) are compositionally biased toward low complexity. Residues 272–331 (GRKKRVPYTKLQLKELENEYAINKFINKDKRRRISAATNLSERQVTIWFQNRRVKDKKIV) constitute a DNA-binding region (homeobox).

This sequence belongs to the Abd-B homeobox family.

Its subcellular location is the nucleus. Sequence-specific transcription factor that binds gene promoters and activates their transcription. Part of a developmental regulatory system that provides cells with specific positional identities on the anterior-posterior axis. The chain is Homeobox protein Hox-D13 (Hoxd13) from Mus musculus (Mouse).